The primary structure comprises 454 residues: MSGYERKNTTANSITITKRKRNSISEQSENVYEKSNRKESITLKPHRSFTPGFSQRDCKPVRHSKSSLRRRRRTKEKISSSVEREWVFSANNFENLADKLVLVSYNLLGVDNASNHMDLYYNVPRKHLEWSRRKHLICKEISRYNASILCLQEVDRFDDLDVLLKNRGFRGVHKSRTGEASDGCAIFWKENLFELLDHQHIEFDKFGMRNNVAQLCVLEMNCEEDPKSKLRVRSSDPRRLVVGNIHVLFNPKRGDIKLGQVRLFLEKAYKLSQEWGNIPVAIAGDLNSTPQSAIYDFIASADLDTQLHDRRQISGQTEVEPKERSFRNHYAFSASASISGSLLNEWSQEELQLATGGQETTHVQHQLKLNSAYSGVPGTYRTRDQRGEPLATTYHSRFLGTVDYIWHTKELVPVRVLETLPADVLRRTGGLPSENWGSDHLAIACELGFVNDWQ.

The interval 1-76 is disordered; it reads MSGYERKNTT…SLRRRRRTKE (76 aa). A compositionally biased stretch (basic and acidic residues) spans 31–41; that stretch reads VYEKSNRKESI. Residues 61–75 are compositionally biased toward basic residues; the sequence is VRHSKSSLRRRRRTK. Glu-153 provides a ligand contact to Mg(2+).

It belongs to the CCR4/nocturin family. Component of the CCR4-NOT complex, at least composed of CRR4 and CAF1 proteins. The cofactor is Mg(2+).

The protein resides in the nucleus. The protein localises to the cytoplasm. It catalyses the reaction Exonucleolytic cleavage of poly(A) to 5'-AMP.. Its function is as follows. Acts as a catalytic component of the CCR4-NOT core complex, which in the nucleus seems to be a general transcription factor, and in the cytoplasm the major mRNA deadenylase involved in mRNA turnover. The sequence is that of Carbon catabolite repressor protein 4 homolog 5 (CCR4-5) from Arabidopsis thaliana (Mouse-ear cress).